The following is a 506-amino-acid chain: CDK5 regulatory subunit-associated protein 3 (506 aa).

3 short sequence motifs (shuffled ATG8-binding motif) span residues 267–270, 292–295, and 310–313; these read IDWG. The interval 269-506 is required for interaction with UFL1 and mediates interaction with CHEK1; it reads WGDFGVEAVS…RPVNLMGTSL (238 aa). The RPL10a-binding domain (RBD) stretch occupies residues 355 to 370; the sequence is DELMELEIFLAQRAVE. Residue lysine 450 forms a Glycyl lysine isopeptide (Lys-Gly) (interchain with G-Cter in SUMO2) linkage.

It belongs to the CDK5RAP3 family. Substrate adapter component of the UFM1 ribosome E3 ligase (UREL) complex, composed of UFL1, DDRGK1 and CDK5RAP3. Interaction with UFL1 anchors CDK5RAP3 in the cytoplasm, preventing its translocation to the nucleus which allows expression of the CCND1 cyclin and progression of cells through the G1/S transition. Interacts with ATG8 family proteins MAP1LC3A, MAP1LC3B, GABARAP, GABARAPL1 and GABARAPL2. Interacts with CDK5R1; competes with CDK5RAP1 and CDK5RAP2. Interacts with RELA. Interacts with CHEK1; may negatively regulate CHEK1 and thereby stimulate entry into mitosis. Interacts with CDKN2A/ARF and MDM2; forms a ternary complex involved in regulation of p53/TP53. Interacts with MAPK14. Interacts with CCNB1. Interacts with TUBG1; may regulate CDK5RAP3 in mitotic G2/M transition checkpoint. As to quaternary structure, (Microbial infection) Interacts with hepatitis B virus large envelope protein mutant pre-s2; promotes mitotic entry. In terms of processing, may be phosphorylated by CDK5. Ubiquitinated. Probably triggers proteasomal degradation and is negatively regulated by UFL1. Post-translationally, may be ufmylated. In terms of processing, cleaved by caspases early during apoptosis, the resulting peptides may play a role in rupture of the nuclear envelope. As to expression, ubiquitously expressed. Expressed in heart, brain, placenta, lung, liver, skeletal muscle, kidney and pancreas. Isoform 3 is expressed in kidney, liver, skeletal muscle and placenta.

It localises to the endoplasmic reticulum membrane. The protein resides in the cytoplasm. It is found in the nucleus. The protein localises to the cytoskeleton. Its subcellular location is the microtubule organizing center. It localises to the centrosome. Substrate adapter of E3 ligase complexes mediating ufmylation, the covalent attachment of the ubiquitin-like modifier UFM1 to substrate proteins, and which is involved in various processes, such as ribosome recycling and reticulophagy (also called ER-phagy). As part of the UREL complex, plays a key role in ribosome recycling by promoting mono-ufmylation of RPL26/uL24 subunit of the 60S ribosome. Ufmylation of RPL26/uL24 occurs on free 60S ribosomes following ribosome dissociation: it weakens the junction between post-termination 60S subunits and SEC61 translocons, promoting release and recycling of the large ribosomal subunit from the endoplasmic reticulum membrane. Ufmylation of RPL26/uL24 and subsequent 60S ribosome recycling either take place after normal termination of translation or after ribosome stalling during cotranslational translocation at the endoplasmic reticulum. Within the UREL complex, CDK5RAP3 acts as a substrate adapter that constrains UFL1 ligase activity to mono-ufmylate RPL26/uL24 at 'Lys-134'. The UREL complex is also involved in reticulophagy in response to endoplasmic reticulum stress by promoting ufmylation of proteins such as CYB5R3, thereby promoting lysosomal degradation of ufmylated proteins. Also acts as a regulator of transcription: negatively regulates NF-kappa-B-mediated gene transcription through the control of RELA phosphorylation. Also regulates mitotic G2/M transition checkpoint and mitotic G2 DNA damage checkpoint. Through its interaction with CDKN2A/ARF and MDM2 may induce MDM2-dependent p53/TP53 ubiquitination, stabilization and activation in the nucleus, thereby promoting G1 cell cycle arrest and inhibition of cell proliferation. May also play a role in the rupture of the nuclear envelope during apoptosis. May regulate MAPK14 activity by regulating its dephosphorylation by PPM1D/WIP1. Required for liver development. Its function is as follows. (Microbial infection) May be negatively regulated by hepatitis B virus large envelope protein mutant pre-s2 to promote mitotic entry. The sequence is that of CDK5 regulatory subunit-associated protein 3 from Homo sapiens (Human).